A 238-amino-acid polypeptide reads, in one-letter code: tRNA (guanine-N(7)-)-methyltransferase (238 aa).

Residues E68, E93, D120, and D143 each contribute to the S-adenosyl-L-methionine site. The active site involves D143. Substrate contacts are provided by residues K147, D179, and 216–219 (TKFE).

It belongs to the class I-like SAM-binding methyltransferase superfamily. TrmB family.

It catalyses the reaction guanosine(46) in tRNA + S-adenosyl-L-methionine = N(7)-methylguanosine(46) in tRNA + S-adenosyl-L-homocysteine. It participates in tRNA modification; N(7)-methylguanine-tRNA biosynthesis. Functionally, catalyzes the formation of N(7)-methylguanine at position 46 (m7G46) in tRNA. This chain is tRNA (guanine-N(7)-)-methyltransferase, found in Shewanella woodyi (strain ATCC 51908 / MS32).